The chain runs to 289 residues: Serine/threonine-protein phosphatase Pgam5, mitochondrial (289 aa).

Residues 7 to 23 (FVCGTGAGLAVYYLQRL) form a helical membrane-spanning segment.

The protein belongs to the phosphoglycerate mutase family. BPG-dependent PGAM subfamily. As to quaternary structure, interacts with Pk92B/ASK1.

The protein resides in the mitochondrion outer membrane. The enzyme catalyses O-phospho-L-seryl-[protein] + H2O = L-seryl-[protein] + phosphate. It catalyses the reaction O-phospho-L-threonyl-[protein] + H2O = L-threonyl-[protein] + phosphate. Displays phosphatase activity for serine/threonine residues, and dephosphorylates and activates Pk92B kinase. Has apparently no phosphoglycerate mutase activity. This chain is Serine/threonine-protein phosphatase Pgam5, mitochondrial, found in Drosophila erecta (Fruit fly).